The sequence spans 285 residues: Acetyl-coenzyme A carboxylase carboxyl transferase subunit beta (285 aa).

The CoA carboxyltransferase N-terminal domain maps to Gly-24–Ala-285.

This sequence belongs to the AccD/PCCB family. In terms of assembly, acetyl-CoA carboxylase is a heterohexamer composed of biotin carboxyl carrier protein (AccB), biotin carboxylase (AccC) and two subunits each of ACCase subunit alpha (AccA) and ACCase subunit beta (AccD).

It is found in the cytoplasm. It carries out the reaction N(6)-carboxybiotinyl-L-lysyl-[protein] + acetyl-CoA = N(6)-biotinyl-L-lysyl-[protein] + malonyl-CoA. It participates in lipid metabolism; malonyl-CoA biosynthesis; malonyl-CoA from acetyl-CoA: step 1/1. Component of the acetyl coenzyme A carboxylase (ACC) complex. Biotin carboxylase (BC) catalyzes the carboxylation of biotin on its carrier protein (BCCP) and then the CO(2) group is transferred by the transcarboxylase to acetyl-CoA to form malonyl-CoA. This is Acetyl-coenzyme A carboxylase carboxyl transferase subunit beta from Christiangramia forsetii (strain DSM 17595 / CGMCC 1.15422 / KT0803) (Gramella forsetii).